The sequence spans 172 residues: MKIYKDIITGDEMFADTYKMKLVDEVIYEVYGKLITRQGDDIKLEGANASAEEADEGTDITSESGVDVVLNHRLQECFAFGDKKSYTLYLKDYMKKVLAKLEEKSPDQVDVFKTNMNKAMKDILGRFKELQFFTGESMDCDGMVALVEYREINGDSVPVLMFFKHGLDEEKC.

A TCTP domain is found at 1–172 (MKIYKDIITG…FKHGLDEEKC (172 aa)).

This sequence belongs to the TCTP family.

Its subcellular location is the cytoplasm. Involved in calcium binding and microtubule stabilization. This Drosophila yakuba (Fruit fly) protein is Translationally-controlled tumor protein homolog.